We begin with the raw amino-acid sequence, 265 residues long: Palmitoyltransferase ZDHHC21 (265 aa).

Over 1–16 the chain is Cytoplasmic; it reads MGLRIHFVVDPHGWCC. The chain crosses the membrane as a helical span at residues 17–37; the sequence is MGLIVFVWLYNIVLIPKIVLF. Over 38-44 the chain is Extracellular; it reads PHYEEGH. The helical transmembrane segment at 45–65 threads the bilayer; it reads IPGILIIIFYGISIFCLVALV. Residues 66–133 are Cytoplasmic-facing; the sequence is RASITDPGRL…NNCVGEDNHW (68 aa). Residues 90-140 form the DHHC domain; that stretch reads ELCNKCNLMRPKRSHHCSRCGHCVRRMDHHCPWINNCVGEDNHWLFLQLCF. The active-site S-palmitoyl cysteine intermediate is Cys-120. The chain crosses the membrane as a helical span at residues 134 to 154; the sequence is LFLQLCFYTELLTCYALMFSF. The Extracellular portion of the chain corresponds to 155–185; sequence CHYYYFLPLKKRNLDLFVFRHELAIMRLAAF. Residues 186–206 traverse the membrane as a helical segment; it reads MGITMLVGITGLFYTQLIGII. Over 207–265 the chain is Cytoplasmic; the sequence is TDTTSIEKMSNCCEDISRPRKPWQQTFSEVFGTRWKILWFIPFRQRQPLRVPYHFANHV.

It belongs to the DHHC palmitoyltransferase family. As to expression, widely expressed.

The protein localises to the golgi apparatus membrane. Its subcellular location is the golgi apparatus. It localises to the cis-Golgi network membrane. It is found in the cell membrane. The catalysed reaction is L-cysteinyl-[protein] + hexadecanoyl-CoA = S-hexadecanoyl-L-cysteinyl-[protein] + CoA. In terms of biological role, palmitoyltransferase that catalyzes the addition of palmitate onto various protein substrates. Palmitoylates sex steroid hormone receptors, including ESR1, PGR and AR, thereby regulating their targeting to the plasma membrane. This affects rapid intracellular signaling by sex hormones via ERK and AKT kinases and the generation of cAMP, but does not affect that mediated by their nuclear receptor. Palmitoylates FYN, regulates its localization in hair follicles and plays a key role in epidermal homeostasis and hair follicle differentiation. Through the palmitoylation of PLCB1 and the regulation of PLCB1 downstream signaling may indirectly regulate the function of the endothelial barrier and the adhesion of leukocytes to the endothelium. Also has a palmitoyltransferase activity toward ADRA1D, positively regulating its activity and expression and may thereby play a role in vascular contraction. May also palmitoylate eNOS and LCK. This is Palmitoyltransferase ZDHHC21 from Homo sapiens (Human).